Here is a 322-residue protein sequence, read N- to C-terminus: Nitrilase (322 aa).

In terms of domain architecture, CN hydrolase spans valine 5–leucine 283. Glutamate 45 acts as the Proton acceptor in catalysis. The active site involves lysine 127. The Nucleophile role is filled by cysteine 162.

This sequence belongs to the carbon-nitrogen hydrolase superfamily. Nitrilase family.

The catalysed reaction is a nitrile + 2 H2O = a carboxylate + NH4(+). Nitrilase that hydrolyzes preferentially 4-cyanopyridine. In Talaromyces marneffei (strain ATCC 18224 / CBS 334.59 / QM 7333) (Penicillium marneffei), this protein is Nitrilase.